The sequence spans 440 residues: 3-phosphoshikimate 1-carboxyvinyltransferase (440 aa).

3-phosphoshikimate contacts are provided by Lys-28, Ser-29, and Arg-33. Residue Lys-28 coordinates phosphoenolpyruvate. Phosphoenolpyruvate-binding residues include Gly-98 and Arg-126. 3-phosphoshikimate-binding residues include Ser-171, Gln-173, Asp-318, and Lys-345. Residue Gln-173 coordinates phosphoenolpyruvate. The Proton acceptor role is filled by Asp-318. The phosphoenolpyruvate site is built by Arg-349 and Arg-391.

It belongs to the EPSP synthase family. In terms of assembly, monomer.

The protein resides in the cytoplasm. It carries out the reaction 3-phosphoshikimate + phosphoenolpyruvate = 5-O-(1-carboxyvinyl)-3-phosphoshikimate + phosphate. Its pathway is metabolic intermediate biosynthesis; chorismate biosynthesis; chorismate from D-erythrose 4-phosphate and phosphoenolpyruvate: step 6/7. Its function is as follows. Catalyzes the transfer of the enolpyruvyl moiety of phosphoenolpyruvate (PEP) to the 5-hydroxyl of shikimate-3-phosphate (S3P) to produce enolpyruvyl shikimate-3-phosphate and inorganic phosphate. In Anaeromyxobacter sp. (strain K), this protein is 3-phosphoshikimate 1-carboxyvinyltransferase.